The following is a 357-amino-acid chain: DNA integrity scanning protein DisA (357 aa).

In terms of domain architecture, DAC spans 8-146 (VKSMINILQL…GNLRYTLKDI (139 aa)). Residues Gly75, Leu93, and 106–110 (MRHRT) contribute to the ATP site.

Belongs to the DisA family. In terms of assembly, homooctamer. Mg(2+) is required as a cofactor.

It carries out the reaction 2 ATP = 3',3'-c-di-AMP + 2 diphosphate. In terms of biological role, participates in a DNA-damage check-point that is active prior to asymmetric division when DNA is damaged. DisA forms globular foci that rapidly scan along the chromosomes during sporulation, searching for lesions. When a lesion is present, DisA pauses at the lesion site. This triggers a cellular response that culminates in a temporary block in sporulation initiation. Its function is as follows. Also has diadenylate cyclase activity, catalyzing the condensation of 2 ATP molecules into cyclic di-AMP (c-di-AMP). c-di-AMP acts as a signaling molecule that couples DNA integrity with progression of sporulation. The rise in c-di-AMP level generated by DisA while scanning the chromosome, operates as a positive signal that advances sporulation; upon encountering a lesion, the DisA focus arrests at the damaged site and halts c-di-AMP synthesis. In Bacillus cereus (strain G9842), this protein is DNA integrity scanning protein DisA.